We begin with the raw amino-acid sequence, 294 residues long: Proteasome subunit beta (294 aa).

The propeptide at Met1–Gly65 is removed in mature form; by autocatalysis. The active-site Nucleophile is Thr66.

This sequence belongs to the peptidase T1B family. The 20S proteasome core is composed of 14 alpha and 14 beta subunits that assemble into four stacked heptameric rings, resulting in a barrel-shaped structure. The two inner rings, each composed of seven catalytic beta subunits, are sandwiched by two outer rings, each composed of seven alpha subunits. The catalytic chamber with the active sites is on the inside of the barrel. Has a gated structure, the ends of the cylinder being occluded by the N-termini of the alpha-subunits. Is capped by the proteasome-associated ATPase, ARC.

It localises to the cytoplasm. It catalyses the reaction Cleavage of peptide bonds with very broad specificity.. It participates in protein degradation; proteasomal Pup-dependent pathway. Its activity is regulated as follows. The formation of the proteasomal ATPase ARC-20S proteasome complex, likely via the docking of the C-termini of ARC into the intersubunit pockets in the alpha-rings, may trigger opening of the gate for substrate entry. Interconversion between the open-gate and close-gate conformations leads to a dynamic regulation of the 20S proteasome proteolysis activity. Functionally, component of the proteasome core, a large protease complex with broad specificity involved in protein degradation. This is Proteasome subunit beta from Rhodococcus opacus (strain B4).